Here is a 246-residue protein sequence, read N- to C-terminus: Sugar fermentation stimulation protein homolog (246 aa).

Belongs to the SfsA family.

This Prochlorococcus marinus (strain MIT 9301) protein is Sugar fermentation stimulation protein homolog.